Here is a 629-residue protein sequence, read N- to C-terminus: Polyadenylate-binding protein, cytoplasmic and nuclear (629 aa).

Residues Met-1–Glu-11 show a composition bias toward polar residues. A disordered region spans residues Met-1 to Ala-48. Positions Ser-20–Gln-36 are enriched in low complexity. 4 consecutive RRM domains span residues Ala-52–Arg-130, Gly-140–Ser-217, Thr-233–Lys-310, and Val-336–Arg-413. Residues Pro-503–Asn-534 form a disordered region. Residues Gln-505–Pro-517 show a composition bias toward polar residues. The PABC domain occupies Ser-537–Lys-618.

The protein belongs to the polyadenylate-binding protein type-1 family.

The protein resides in the cytoplasm. It localises to the nucleus. In terms of biological role, binds the poly(A) tail of mRNA. Appears to be an important mediator of the multiple roles of the poly(A) tail in mRNA biogenesis, stability and translation. In the nucleus, involved in both mRNA cleavage and polyadenylation. Is also required for efficient mRNA export to the cytoplasm. Acts in concert with a poly(A)-specific nuclease (PAN) to affect poly(A) tail shortening, which may occur concomitantly with either nucleocytoplasmic mRNA transport or translational initiation. In the cytoplasm, stimulates translation initiation and regulates mRNA decay through translation termination-coupled poly(A) shortening, probably mediated by PAN. The protein is Polyadenylate-binding protein, cytoplasmic and nuclear (PAB1) of Candida albicans (strain SC5314 / ATCC MYA-2876) (Yeast).